We begin with the raw amino-acid sequence, 147 residues long: UPF0306 protein YhbP (147 aa).

This sequence belongs to the UPF0306 family.

The polypeptide is UPF0306 protein YhbP (Salmonella agona (strain SL483)).